The sequence spans 240 residues: Insulin-like growth factor-binding protein 3 receptor (240 aa).

The N-terminal stretch at 1–38 (MGNCQAGHNLHLCLAHHPPLVCATLILLLLGLSGLGLG) is a signal peptide. Over 39–204 (SFLLTHRTGL…SEELALCGSR (166 aa)) the chain is Extracellular. N-linked (GlcNAc...) asparagine glycans are attached at residues Asn73, Asn101, and Asn167. The helical transmembrane segment at 205 to 225 (LLVLGSFLLLFCGLLCCVTAM) threads the bilayer. Residues 226-240 (CFHPRRESHWSRTRL) lie on the Cytoplasmic side of the membrane.

As to quaternary structure, interacts with IGFBP3. Interacts with CASP8. Widely expressed in normal tissues but suppressed in prostate and breast tumor.

It is found in the cell membrane. Functionally, cell death receptor specific for IGFBP3, may mediate caspase-8-dependent apoptosis upon ligand binding. This Homo sapiens (Human) protein is Insulin-like growth factor-binding protein 3 receptor (TMEM219).